Reading from the N-terminus, the 167-residue chain is CASP-like protein UU1 (167 aa).

Over 1–17 (MVELESQEAVTVASTAD) the chain is Cytoplasmic. Residues 18-38 (IAVDVSLRLLAAATSLASAVV) traverse the membrane as a helical segment. At 39-54 (VAANHQQRWGVRVDFT) the chain is on the extracellular side. Residues 55–75 (LFQVWIGFVAVNLVCTVYAAA) traverse the membrane as a helical segment. Topologically, residues 76–94 (TAAAARKAMGRWWLHHADA) are cytoplasmic. The helical transmembrane segment at 95–115 (VVVNLEAAATAGAGAIGSIAM) threads the bilayer. Topologically, residues 116–135 (WGNEASGWYAVCRLYRRYCN) are extracellular. The helical transmembrane segment at 136–156 (AGAAALALSLAAVLLLGVACA) threads the bilayer. Residues 157-167 (RSRYPKMPPTT) are Cytoplasmic-facing.

This sequence belongs to the Casparian strip membrane proteins (CASP) family. In terms of assembly, homodimer and heterodimers.

Its subcellular location is the cell membrane. This chain is CASP-like protein UU1, found in Oryza sativa subsp. indica (Rice).